We begin with the raw amino-acid sequence, 157 residues long: MPSVESFELDHNAVKAPYVRHCGVHKVGSDGEVNKFDIRFCQPNKQAMKPDTIHTLEHLLAFNIRTHSEKYDHFDIIDISPMGCQTGYYLVVSGAPTPEEIVELLDATFKDAVEVTEIPAANEEQCGQAKLHDLEGAKRLMRFWLSQDQEELLKVFG.

H54, H58, and C126 together coordinate Fe cation.

Belongs to the LuxS family. As to quaternary structure, homodimer. Fe cation is required as a cofactor.

The catalysed reaction is S-(5-deoxy-D-ribos-5-yl)-L-homocysteine = (S)-4,5-dihydroxypentane-2,3-dione + L-homocysteine. In terms of biological role, involved in the synthesis of autoinducer 2 (AI-2) which is secreted by bacteria and is used to communicate both the cell density and the metabolic potential of the environment. The regulation of gene expression in response to changes in cell density is called quorum sensing. Catalyzes the transformation of S-ribosylhomocysteine (RHC) to homocysteine (HC) and 4,5-dihydroxy-2,3-pentadione (DPD). In Bacillus pumilus (strain SAFR-032), this protein is S-ribosylhomocysteine lyase.